Consider the following 61-residue polypeptide: Large ribosomal subunit protein uL30 (61 aa).

It belongs to the universal ribosomal protein uL30 family. In terms of assembly, part of the 50S ribosomal subunit.

In Corynebacterium diphtheriae (strain ATCC 700971 / NCTC 13129 / Biotype gravis), this protein is Large ribosomal subunit protein uL30.